Consider the following 1322-residue polypeptide: Serine/threonine-protein phosphatase UIS2 (1322 aa).

The N-terminal stretch at 1–22 (MNISKFFLIFIPLVLFKYPANN) is a signal peptide. Residues 1 to 535 (MNISKFFLIF…NELKSTSNAM (535 aa)) are interaction with phosphorylated eIF2alpha. Basic and acidic residues-rich tracts occupy residues 267-279 (EKSA…KELN) and 288-326 (NSKK…KSEN). Disordered stretches follow at residues 267 to 326 (EKSA…KSEN), 613 to 646 (NTNT…SENN), 1066 to 1087 (NETP…IQPN), and 1170 to 1196 (EVPD…NKDD). Low complexity predominate over residues 631-646 (NNYTDGNEGNNNSENN).

The cofactor is Mn(2+).

It carries out the reaction O-phospho-L-seryl-[protein] + H2O = L-seryl-[protein] + phosphate. Functionally, protein phosphatase which dephosphorylates 'Ser-59' of translation factor eIF2alpha during the liver stage, thus enabling protein translation. The chain is Serine/threonine-protein phosphatase UIS2 from Plasmodium berghei (strain Anka).